A 303-amino-acid polypeptide reads, in one-letter code: Phenoloxidase-activating factor 2 (303 aa).

A disordered region spans residues 1 to 24; it reads PDRRPPEDPITPPPPTKEEQRAGC. One can recognise a Peptidase S1 domain in the interval 36–292; that stretch reads IIGDKDGEAK…LRDWIDDKVA (257 aa). Cystine bridges form between Cys173/Cys247, Cys206/Cys227, and Cys237/Cys268.

The protein belongs to the peptidase S1 family. Heterodimer.

Its subcellular location is the secreted. Functionally, binds and activates processed prophenoloxidases PPO1 and PPO2 and thus is involved in the activation of the prophenoloxidase cascade probably following the recognition of pathogen-derived products. Binds the A.niger cell wall component alpha-1,3-glucan, a fungal pathogen-associated molecular pattern (PAMP) that activates the host immune response. The chain is Phenoloxidase-activating factor 2 (LOC113510063) from Galleria mellonella (Greater wax moth).